Here is a 226-residue protein sequence, read N- to C-terminus: tRNA (guanine-N(7)-)-methyltransferase (226 aa).

The S-adenosyl-L-methionine site is built by aspartate 59, glutamate 84, and aspartate 111. Aspartate 169 is a binding site for substrate.

The protein belongs to the class I-like SAM-binding methyltransferase superfamily. TrmB family.

The enzyme catalyses guanosine(46) in tRNA + S-adenosyl-L-methionine = N(7)-methylguanosine(46) in tRNA + S-adenosyl-L-homocysteine. Its pathway is tRNA modification; N(7)-methylguanine-tRNA biosynthesis. Functionally, catalyzes the formation of N(7)-methylguanine at position 46 (m7G46) in tRNA. This chain is tRNA (guanine-N(7)-)-methyltransferase, found in Chloroherpeton thalassium (strain ATCC 35110 / GB-78).